The sequence spans 306 residues: MAALLGRDLLSLADLTPTELQELLQLATQLKSQQLKLRCNKVLGLLFSKASTRTRVSFTVAMYQLGGQVIDLNPNVTQVSRGEPVQDTARVLERYLDVLAIRTFEQQELATFAEYAKIPVINALTDLEHPCQILADLLTAQECFDTISGLTLTYVGDGNNVANSLMLGCALAGMNVRIATPSGYEPNPQVVAQAQAIADGKTEILLTNDPELATKGASVLYTDVWASMGQEAEANDRFPIFQPYQISEKLLSLAEPNAIVLHCLPAHRGEEITEEVIEGSQSRVWQQAENRLHVQKALLASILGAE.

Carbamoyl phosphate-binding positions include 51 to 54 (STRT), glutamine 78, arginine 102, and 129 to 132 (HPCQ). Residues asparagine 160, aspartate 223, and 227-228 (SM) contribute to the L-ornithine site. Carbamoyl phosphate-binding positions include 263–264 (CL) and arginine 291.

It belongs to the aspartate/ornithine carbamoyltransferase superfamily. OTCase family.

It localises to the cytoplasm. The enzyme catalyses carbamoyl phosphate + L-ornithine = L-citrulline + phosphate + H(+). Its pathway is amino-acid biosynthesis; L-arginine biosynthesis; L-arginine from L-ornithine and carbamoyl phosphate: step 1/3. Its function is as follows. Reversibly catalyzes the transfer of the carbamoyl group from carbamoyl phosphate (CP) to the N(epsilon) atom of ornithine (ORN) to produce L-citrulline. The polypeptide is Ornithine carbamoyltransferase (Trichormus variabilis (strain ATCC 29413 / PCC 7937) (Anabaena variabilis)).